The chain runs to 406 residues: Arginine deiminase (406 aa).

Cysteine 396 (amidino-cysteine intermediate) is an active-site residue.

The protein belongs to the arginine deiminase family.

It localises to the cytoplasm. The enzyme catalyses L-arginine + H2O = L-citrulline + NH4(+). It participates in amino-acid degradation; L-arginine degradation via ADI pathway; carbamoyl phosphate from L-arginine: step 1/2. The protein is Arginine deiminase of Aliivibrio fischeri (strain MJ11) (Vibrio fischeri).